Here is a 20-residue protein sequence, read N- to C-terminus: Short cationic peptide-4c (20 aa).

The residue at position 20 (glutamate 20) is a Glutamic acid 1-amide.

As to expression, expressed by the venom gland.

It is found in the secreted. The sequence is that of Short cationic peptide-4c from Cupiennius salei (American wandering spider).